The primary structure comprises 151 residues: C-C motif chemokine 25 (151 aa).

Residues 1 to 22 (MNLWLLVCLVASLMGAWSTVHT) form the signal peptide. Disulfide bonds link Cys-29/Cys-57 and Cys-30/Cys-73. Residues 94 to 151 (THSKQHLGSRRNLQDSHLGGQRSNTGMSRLAHSKSKSSRSTRSNKKKTSFLNMANPGP) are disordered. Over residues 124-141 (AHSKSKSSRSTRSNKKKT) the composition is skewed to basic residues.

The protein belongs to the intercrine beta (chemokine CC) family.

The protein localises to the secreted. Functionally, potentially involved in T-cell development. Recombinant protein shows chemotactic activity on thymocytes, macrophages, THP-1 cells, and dendritics cells but is inactive on peripheral blood lymphocytes and neutrophils. Binds to CCR9. Binds to atypical chemokine receptor ACKR4 and mediates the recruitment of beta-arrestin (ARRB1/2) to ACKR4. This is C-C motif chemokine 25 (CCL25) from Canis lupus familiaris (Dog).